A 169-amino-acid chain; its full sequence is MYTSGYANRSSSFSTAVNNTARVATTNTTAGLISEVVYREDQPMMTQLLLLPLLQQLGQQSRWQLWLTPQQKLSREWVQASGLPLSKVMQINQLSPCHTVESMIRALRTGNYSVVIGWLAEELTEEEHAELVNAANEGNAMGFIMRPVSARTHATRQLSGLKIHSNLYH.

A ftsZ binding region spans residues 106 to 112 (ALRTGNY). A lon protease binding region spans residues 162–169 (KIHSNLYH).

Belongs to the SulA family. As to quaternary structure, interacts with FtsZ. Is rapidly cleaved and degraded by the Lon protease once DNA damage is repaired.

Its function is as follows. Component of the SOS system and an inhibitor of cell division. Accumulation of SulA causes rapid cessation of cell division and the appearance of long, non-septate filaments. In the presence of GTP, binds a polymerization-competent form of FtsZ in a 1:1 ratio, thus inhibiting FtsZ polymerization and therefore preventing it from participating in the assembly of the Z ring. This mechanism prevents the premature segregation of damaged DNA to daughter cells during cell division. The sequence is that of Cell division inhibitor SulA from Escherichia fergusonii (strain ATCC 35469 / DSM 13698 / CCUG 18766 / IAM 14443 / JCM 21226 / LMG 7866 / NBRC 102419 / NCTC 12128 / CDC 0568-73).